We begin with the raw amino-acid sequence, 431 residues long: Synaptotagmin-11 (431 aa).

The Vesicular segment spans residues 1–15; the sequence is MAEITNIRPSFDVSP. A helical membrane pass occupies residues 16–36; that stretch reads VVAGLIGASVLVVCVSVTVFV. Residues 37–431 lie on the Cytoplasmic side of the membrane; sequence WSCCHQQAEK…VAKWHSLSEY (395 aa). A Phosphoserine modification is found at S134. The tract at residues 134–154 is disordered; sequence SPITSLTPGESKTTSPSSPEE. A compositionally biased stretch (low complexity) spans 140–151; the sequence is TPGESKTTSPSS. C2 domains are found at residues 157 to 279 and 291 to 426; these read MLGS…QLTR and SRGE…AKWH. Positions 250, 253, and 256 each coordinate Ca(2+).

Belongs to the synaptotagmin family. As to quaternary structure, homodimer. Can also form heterodimers. Interacts with PRKN. Interacts (via C2 2 domain) with AGO2 and SND1; the interaction with SND1 is direct. Interacts with KIF1A; the interaction increases in presence of calcium. It depends on Ca(2+) as a cofactor. Post-translationally, ubiquitinated, at least by PRKN, and targeted to the proteasome complex for degradation. Ubiquitination is inhibited by ATP13A2.

Its subcellular location is the cytoplasmic vesicle membrane. The protein resides in the perikaryon. It is found in the golgi apparatus. It localises to the trans-Golgi network membrane. The protein localises to the recycling endosome membrane. Its subcellular location is the lysosome membrane. The protein resides in the cytoplasmic vesicle. It is found in the phagosome. It localises to the cell projection. The protein localises to the axon. Its subcellular location is the dendrite. The protein resides in the postsynaptic density. It is found in the clathrin-coated vesicle membrane. Its function is as follows. Synaptotagmin family member involved in vesicular and membrane trafficking which does not bind Ca(2+). Inhibits clathrin-mediated and bulk endocytosis, functions to ensure precision in vesicle retrieval. Plays an important role in dopamine transmission by regulating endocytosis and the vesicle-recycling process. Essential component of a neuronal vesicular trafficking pathway that differs from the synaptic vesicle trafficking pathway but is crucial for development and synaptic plasticity. In macrophages and microglia, inhibits the conventional cytokine secretion, of at least IL6 and TNF, and phagocytosis. In astrocytes, regulates lysosome exocytosis, mechanism required for the repair of injured astrocyte cell membrane. Required for the ATP13A2-mediated regulation of the autophagy-lysosome pathway. The polypeptide is Synaptotagmin-11 (Homo sapiens (Human)).